The sequence spans 467 residues: Neurexin-1-beta (467 aa).

The signal sequence occupies residues 1-45 (MYQRMLRCGAELGSPGGGGGGAGGRLALLWIVPLTLSGLLGVAWG). Over 46-391 (ASSLGAHHIH…EVIRESSSTT (346 aa)) the chain is Extracellular. A Laminin G-like domain is found at 86 to 284 (YIFSKGGGQI…DANIAIVGNV (199 aa)). Ca(2+)-binding residues include Asp-136 and Val-153. Asn-183 carries N-linked (GlcNAc...) asparagine glycosylation. Residues 200-229 (GNNDNERLAIARQRIPYRLGRVVDEWLLDK) are essential for interaction with CBLN1; modulates interaction affinity with NLGN1, NLGN2 and NLGN3; prevents interaction with DAG1/alpha-dystroglycan; modulates interaction with alpha-latrotoxin. Positions 235 and 237 each coordinate Ca(2+). The segment at 318–380 (LATSTARRGN…AGGREPYPGS (63 aa)) is disordered. Residues 324–339 (RRGNSPTKEPVSQTTD) are compositionally biased toward polar residues. The O-linked (Xyl...) (heparan sulfate) serine glycan is linked to Ser-345. A helical transmembrane segment spans residues 392–412 (GMVVGIVAAAALCILILLYAM). At 413-467 (YKYRNRDEGSYHVDESRNYISNSAQSNGAVVKEKQPSSAKSANKNKKNKDKEYYV) the chain is on the cytoplasmic side. Positions 434 to 467 (NSAQSNGAVVKEKQPSSAKSANKNKKNKDKEYYV) are disordered. Phosphoserine is present on residues Ser-449, Ser-450, and Ser-453.

It belongs to the neurexin family. The cytoplasmic C-terminal region binds to CASK. Binds NLGN1, NLGN2 and NLGN3, DAG1 (alpha-dystroglycan) and alpha-latrotoxin. Binding to neuroligins is calcium-dependent, and the binding preference ranks as follow: NLGN1 &gt; NLGN4 &gt;&gt; NLGN3 &gt; NLGN2. Interacts with CBLN2 and more weakly with CBLN4. Interacts with CBLN1; interaction is CBLN1 hexamer form-dependent; CBLN1-binding is calcium-independent; isoform 1b does not interact with CBLN1. Interacts with CLSTN3. In terms of processing, O-glycosylated; contains heparan sulfate. Heparan sulfate attachment is required for synapse development by mediating interactions with neuroligins.

It localises to the presynaptic cell membrane. Functionally, neuronal cell surface protein involved in cell recognition and cell adhesion by forming intracellular junctions through binding to neuroligins. Plays a role in formation of synaptic junctions. Functions as part of a trans-synaptic complex by binding to cerebellins and postsynaptic GRID1. This interaction helps regulate the activity of NMDA and AMPA receptors at hippocampal synapses without affecting synapse formation. NRXN1B-CBLN2-GRID1 complex transduce presynaptic signals into postsynaptic NMDAR response. This chain is Neurexin-1-beta, found in Bos taurus (Bovine).